The following is a 606-amino-acid chain: MIQVLLVTICLAAFPYQGSSIILESGNVNDYEVVYARKVTALPKGAVQPKYEDTMQYELKVNGEPVVLHLEKNKQLFSKDYSETHYSPDGREITTYPPVEDHCYYHGRIENDADSTASISACNGLKGHFKLQGETYFIEPLKLPNSEAHAVFKYENVEKEDEVPKMCGVTQTNWESDEPIKKASQLVVTAEQQRYNHYKYIELVILADYRMVTKNNGDLGKIRTKIYEIVNILNEIFRYLYIRIALVGIEIWSNADLSNVTLSADDTLASFGTWRGTVLLKRKSHDNAQLLTAIDFDGQTIGIANIASMCNQNKSVGVVMDYSPINLVVAVIMAHEMGHNLGINHDTGSCSCGGYSCIMAPEISDQPSKLFSNCSKQAYQRYINYYKPQCILNEPLRTDIVSPPVCGNELLEMGEECDCGSPRNCRDPCCDAATCKLHSWVECESGECCDQCRFKGAGTECRAARSECDIAESCTGQSADCPTDDFKRNGQPCLHNYGYCYNGNCPIMYHQCYALFGSNATVAEDGCFEFNENGDKYFYCRKQSGVNIPCAQEDVKCGRLFCHTKKHPCDYKYSEDPDYGMVDNGTKCADGKVCSNGHCVDVATAY.

Positions 1-20 (MIQVLLVTICLAAFPYQGSS) are cleaved as a signal peptide. Positions 21-190 (IILESGNVND…KKASQLVVTA (170 aa)) are excised as a propeptide. Residues 199 to 395 (KYIELVILAD…YKPQCILNEP (197 aa)) form the Peptidase M12B domain. Glu-202 contributes to the Ca(2+) binding site. Asn-259 is a glycosylation site (N-linked (GlcNAc...) asparagine). Asp-286 is a binding site for Ca(2+). 3 disulfides stabilise this stretch: Cys-310–Cys-390, Cys-350–Cys-374, and Cys-352–Cys-357. N-linked (GlcNAc...) asparagine glycosylation is present at Asn-313. His-335 is a binding site for Zn(2+). Residue Glu-336 is part of the active site. Residues His-339 and His-345 each contribute to the Zn(2+) site. The N-linked (GlcNAc...) asparagine glycan is linked to Asn-373. Cys-390, Asn-393, Val-405, Asn-408, Leu-410, Glu-412, Glu-415, and Asp-418 together coordinate Ca(2+). The Disintegrin domain occupies 403–489 (PPVCGNELLE…DCPTDDFKRN (87 aa)). 14 disulfides stabilise this stretch: Cys-406–Cys-435, Cys-417–Cys-430, Cys-419–Cys-425, Cys-429–Cys-452, Cys-443–Cys-449, Cys-448–Cys-474, Cys-461–Cys-481, Cys-468–Cys-500, Cys-493–Cys-505, Cys-512–Cys-562, Cys-527–Cys-569, Cys-540–Cys-550, Cys-557–Cys-594, and Cys-588–Cys-599. The D/ECD-tripeptide signature appears at 467–469 (ECD). 3 residues coordinate Ca(2+): Asp-469, Glu-472, and Asp-484. N-linked (GlcNAc...) asparagine glycosylation is present at Asn-519. An N-linked (GlcNAc...) asparagine glycan is attached at Asn-584.

The protein belongs to the venom metalloproteinase (M12B) family. P-III subfamily. P-IIIa sub-subfamily. As to quaternary structure, monomer. Zn(2+) is required as a cofactor. In terms of tissue distribution, expressed by the venom gland.

It localises to the secreted. In terms of biological role, the metalloproteinase-disintegrin-like HF3 is a potent hemorrhagic toxin that activates macrophages for phagocytosis through integrin alpha-M/beta-2 (ITGAM/ITGB2). It inhibits collagen-induced platelet aggregation. This protein shows cleavage specificity for substrate for leucine at P1' position, followed by hydrophobic residues in P2'. The polypeptide is Zinc metalloproteinase-disintegrin-like HF3 (Bothrops jararaca (Jararaca)).